We begin with the raw amino-acid sequence, 141 residues long: Large ribosomal subunit protein uL11 (141 aa).

The protein belongs to the universal ribosomal protein uL11 family. As to quaternary structure, part of the ribosomal stalk of the 50S ribosomal subunit. Interacts with L10 and the large rRNA to form the base of the stalk. L10 forms an elongated spine to which L12 dimers bind in a sequential fashion forming a multimeric L10(L12)X complex. Post-translationally, one or more lysine residues are methylated.

Functionally, forms part of the ribosomal stalk which helps the ribosome interact with GTP-bound translation factors. This chain is Large ribosomal subunit protein uL11, found in Prochlorococcus marinus (strain SARG / CCMP1375 / SS120).